We begin with the raw amino-acid sequence, 385 residues long: 8-amino-7-oxononanoate synthase (385 aa).

Arginine 23 lines the substrate pocket. Residue 110 to 111 (GF) coordinates pyridoxal 5'-phosphate. Histidine 135 contacts substrate. Residues serine 180, histidine 208, and threonine 234 each coordinate pyridoxal 5'-phosphate. Lysine 237 is modified (N6-(pyridoxal phosphate)lysine). Threonine 350 is a substrate binding site.

The protein belongs to the class-II pyridoxal-phosphate-dependent aminotransferase family. BioF subfamily. In terms of assembly, homodimer. Pyridoxal 5'-phosphate serves as cofactor.

The catalysed reaction is 6-carboxyhexanoyl-[ACP] + L-alanine + H(+) = (8S)-8-amino-7-oxononanoate + holo-[ACP] + CO2. It participates in cofactor biosynthesis; biotin biosynthesis. Its function is as follows. Catalyzes the decarboxylative condensation of pimeloyl-[acyl-carrier protein] and L-alanine to produce 8-amino-7-oxononanoate (AON), [acyl-carrier protein], and carbon dioxide. The sequence is that of 8-amino-7-oxononanoate synthase from Vibrio vulnificus (strain YJ016).